The chain runs to 296 residues: Small ribosomal subunit protein uS2 (296 aa).

The tract at residues 245 to 296 (WEAPAAGFAGATGTGWDGAAGDEWGAAPATTEWAASAAPAAASGEAAKETTW) is disordered. Over residues 263 to 289 (AAGDEWGAAPATTEWAASAAPAAASGE) the composition is skewed to low complexity.

This sequence belongs to the universal ribosomal protein uS2 family. In terms of assembly, component of the small ribosomal subunit. Mature ribosomes consist of a small (40S) and a large (60S) subunit. The 40S subunit contains about 33 different proteins and 1 molecule of RNA (18S). The 60S subunit contains about 49 different proteins and 3 molecules of RNA (25S, 5.8S and 5S). Interacts with RPS21.

Its subcellular location is the cytoplasm. Functionally, required for the assembly and/or stability of the 40S ribosomal subunit. Required for the processing of the 20S rRNA-precursor to mature 18S rRNA in a late step of the maturation of 40S ribosomal subunits. The sequence is that of Small ribosomal subunit protein uS2 from Fusarium vanettenii (strain ATCC MYA-4622 / CBS 123669 / FGSC 9596 / NRRL 45880 / 77-13-4) (Fusarium solani subsp. pisi).